The following is a 123-amino-acid chain: Large ribosomal subunit protein bL12 (123 aa).

This sequence belongs to the bacterial ribosomal protein bL12 family. In terms of assembly, homodimer. Part of the ribosomal stalk of the 50S ribosomal subunit. Forms a multimeric L10(L12)X complex, where L10 forms an elongated spine to which 2 to 4 L12 dimers bind in a sequential fashion. Binds GTP-bound translation factors.

Its function is as follows. Forms part of the ribosomal stalk which helps the ribosome interact with GTP-bound translation factors. Is thus essential for accurate translation. This chain is Large ribosomal subunit protein bL12, found in Psychrobacter arcticus (strain DSM 17307 / VKM B-2377 / 273-4).